We begin with the raw amino-acid sequence, 184 residues long: ATP synthase subunit b, chloroplastic (184 aa).

A helical membrane pass occupies residues 27 to 49 (LATNPINLSVVFGVLIFFGKGVL).

The protein belongs to the ATPase B chain family. F-type ATPases have 2 components, F(1) - the catalytic core - and F(0) - the membrane proton channel. F(1) has five subunits: alpha(3), beta(3), gamma(1), delta(1), epsilon(1). F(0) has four main subunits: a(1), b(1), b'(1) and c(10-14). The alpha and beta chains form an alternating ring which encloses part of the gamma chain. F(1) is attached to F(0) by a central stalk formed by the gamma and epsilon chains, while a peripheral stalk is formed by the delta, b and b' chains.

The protein resides in the plastid. The protein localises to the chloroplast thylakoid membrane. F(1)F(0) ATP synthase produces ATP from ADP in the presence of a proton or sodium gradient. F-type ATPases consist of two structural domains, F(1) containing the extramembraneous catalytic core and F(0) containing the membrane proton channel, linked together by a central stalk and a peripheral stalk. During catalysis, ATP synthesis in the catalytic domain of F(1) is coupled via a rotary mechanism of the central stalk subunits to proton translocation. In terms of biological role, component of the F(0) channel, it forms part of the peripheral stalk, linking F(1) to F(0). In Nasturtium officinale (Watercress), this protein is ATP synthase subunit b, chloroplastic.